The chain runs to 212 residues: Uracil phosphoribosyltransferase (212 aa).

Residues R78, R103, and D130–S138 each bind 5-phospho-alpha-D-ribose 1-diphosphate. Residues I193 and G198–A200 contribute to the uracil site. D199 contacts 5-phospho-alpha-D-ribose 1-diphosphate.

The protein belongs to the UPRTase family. Requires Mg(2+) as cofactor.

The catalysed reaction is UMP + diphosphate = 5-phospho-alpha-D-ribose 1-diphosphate + uracil. It participates in pyrimidine metabolism; UMP biosynthesis via salvage pathway; UMP from uracil: step 1/1. Allosterically activated by GTP. Functionally, catalyzes the conversion of uracil and 5-phospho-alpha-D-ribose 1-diphosphate (PRPP) to UMP and diphosphate. The chain is Uracil phosphoribosyltransferase from Ectopseudomonas mendocina (strain ymp) (Pseudomonas mendocina).